Consider the following 347-residue polypeptide: NADH-quinone oxidoreductase subunit H (347 aa).

A run of 9 helical transmembrane segments spans residues 22 to 42, 59 to 79, 93 to 113, 124 to 144, 171 to 191, 198 to 218, 240 to 260, 285 to 305, and 321 to 341; these read GVVS…TAYL, PSLA…KLVF, FIIA…VIPI, IGGI…IIIA, MALS…IQIV, PIWL…SILA, VEYS…NMIL, IPGY…FLWI, and GLKV…AILV.

This sequence belongs to the complex I subunit 1 family. NDH-1 is composed of 14 different subunits. Subunits NuoA, H, J, K, L, M, N constitute the membrane sector of the complex.

Its subcellular location is the cell inner membrane. The catalysed reaction is a quinone + NADH + 5 H(+)(in) = a quinol + NAD(+) + 4 H(+)(out). Functionally, NDH-1 shuttles electrons from NADH, via FMN and iron-sulfur (Fe-S) centers, to quinones in the respiratory chain. The immediate electron acceptor for the enzyme in this species is believed to be ubiquinone. Couples the redox reaction to proton translocation (for every two electrons transferred, four hydrogen ions are translocated across the cytoplasmic membrane), and thus conserves the redox energy in a proton gradient. This subunit may bind ubiquinone. This is NADH-quinone oxidoreductase subunit H from Orientia tsutsugamushi (strain Ikeda) (Rickettsia tsutsugamushi).